Reading from the N-terminus, the 639-residue chain is Threonine--tRNA ligase (639 aa).

Positions 1-61 (MIHITLPDGS…TQDSPLSIVT (61 aa)) constitute a TGS domain. The segment at 242 to 533 (DHRKLGRELD…LIEEHAGALP (292 aa)) is catalytic. Positions 333, 384, and 510 each coordinate Zn(2+).

It belongs to the class-II aminoacyl-tRNA synthetase family. In terms of assembly, homodimer. The cofactor is Zn(2+).

Its subcellular location is the cytoplasm. It carries out the reaction tRNA(Thr) + L-threonine + ATP = L-threonyl-tRNA(Thr) + AMP + diphosphate + H(+). Catalyzes the attachment of threonine to tRNA(Thr) in a two-step reaction: L-threonine is first activated by ATP to form Thr-AMP and then transferred to the acceptor end of tRNA(Thr). Also edits incorrectly charged L-seryl-tRNA(Thr). This Acidovorax ebreus (strain TPSY) (Diaphorobacter sp. (strain TPSY)) protein is Threonine--tRNA ligase.